The following is a 796-amino-acid chain: ER degradation-enhancing alpha-mannosidase-like protein 1 (796 aa).

A signal peptide spans 1–20; that stretch reads MVCCLWVLLALLLHLDHVAC. Asparagine 86 carries N-linked (GlcNAc...) asparagine glycosylation. Glutamate 372 functions as the Proton donor in the catalytic mechanism. Residue threonine 495 participates in Ca(2+) binding. Asparagine 517, asparagine 672, and asparagine 762 each carry an N-linked (GlcNAc...) asparagine glycan.

The protein belongs to the glycosyl hydrolase 47 family. As to quaternary structure, interacts with PDI1. Requires Ca(2+) as cofactor.

Its subcellular location is the endoplasmic reticulum lumen. It catalyses the reaction Hydrolysis of terminal, non-reducing alpha-D-mannose residues in alpha-D-mannosides.. It participates in protein modification; protein glycosylation. Alpha-1,2-specific exomannosidase involved in endoplasmic reticulum-associated degradation (ERAD). Delivers misfolded glycoproteins to proteasomes. Forms a complex with PDI1 to process unfolded protein-bound Man8GlcNAc2 oligosaccharides to Man7GlcNAc2, promoting degradation in unfolded protein response. This Saccharomyces cerevisiae (strain ATCC 204508 / S288c) (Baker's yeast) protein is ER degradation-enhancing alpha-mannosidase-like protein 1 (MNL1).